Consider the following 750-residue polypeptide: Photosystem I P700 chlorophyll a apoprotein A1 (750 aa).

The next 8 helical transmembrane spans lie at 70 to 93 (IFSAHFGQLSIIFLWLSGMYFHGA), 156 to 179 (LYCTAIGALVFAALMLFAGWFHYH), 195 to 219 (LNHHLAGLLGLGSLSWAGHQVHVSL), 291 to 309 (IAHHHLAIAILFLIAGHMY), 346 to 369 (WHAQLSLNLAMLGSLTIVVAHHMY), 385 to 411 (LSLFTHHMWIGGFLIVGAAAHAAIFMV), 433 to 455 (AIISHLNWVCIFLGFHSFGLYIH), and 531 to 549 (FLVHHIHAFTIHVTVLILL). Cysteine 573 and cysteine 582 together coordinate [4Fe-4S] cluster. 2 consecutive transmembrane segments (helical) span residues 589-610 (HVFLGLFWMYNSISVVIFHFSW) and 664-686 (LSAYGLLFLGAHFVWAFSLMFLF). Histidine 675 is a binding site for chlorophyll a'. The chlorophyll a site is built by methionine 683 and tyrosine 691. Residue tryptophan 692 coordinates phylloquinone. A helical membrane pass occupies residues 724–744 (AVGVTHYLLGGIATTWAFFLA).

The protein belongs to the PsaA/PsaB family. In terms of assembly, the PsaA/B heterodimer binds the P700 chlorophyll special pair and subsequent electron acceptors. PSI consists of a core antenna complex that captures photons, and an electron transfer chain that converts photonic excitation into a charge separation. The eukaryotic PSI reaction center is composed of at least 11 subunits. Requires P700 is a chlorophyll a/chlorophyll a' dimer, A0 is one or more chlorophyll a, A1 is one or both phylloquinones and FX is a shared 4Fe-4S iron-sulfur center. as cofactor.

Its subcellular location is the plastid. It localises to the chloroplast thylakoid membrane. The enzyme catalyses reduced [plastocyanin] + hnu + oxidized [2Fe-2S]-[ferredoxin] = oxidized [plastocyanin] + reduced [2Fe-2S]-[ferredoxin]. PsaA and PsaB bind P700, the primary electron donor of photosystem I (PSI), as well as the electron acceptors A0, A1 and FX. PSI is a plastocyanin-ferredoxin oxidoreductase, converting photonic excitation into a charge separation, which transfers an electron from the donor P700 chlorophyll pair to the spectroscopically characterized acceptors A0, A1, FX, FA and FB in turn. Oxidized P700 is reduced on the lumenal side of the thylakoid membrane by plastocyanin. This chain is Photosystem I P700 chlorophyll a apoprotein A1, found in Gossypium hirsutum (Upland cotton).